We begin with the raw amino-acid sequence, 203 residues long: Large ribosomal subunit protein bL25 (203 aa).

This sequence belongs to the bacterial ribosomal protein bL25 family. CTC subfamily. In terms of assembly, part of the 50S ribosomal subunit; part of the 5S rRNA/L5/L18/L25 subcomplex. Contacts the 5S rRNA. Binds to the 5S rRNA independently of L5 and L18.

Its function is as follows. This is one of the proteins that binds to the 5S RNA in the ribosome where it forms part of the central protuberance. The chain is Large ribosomal subunit protein bL25 from Cereibacter sphaeroides (strain ATCC 17029 / ATH 2.4.9) (Rhodobacter sphaeroides).